A 910-amino-acid polypeptide reads, in one-letter code: Valine--tRNA ligase (910 aa).

The 'HIGH' region signature appears at 45–55 (PNVTGSLHMGH). The short motif at 554-558 (KMSKS) is the 'KMSKS' region element. Lys557 is an ATP binding site. Positions 842–910 (DLQAEAARLA…TAESRIRDAS (69 aa)) form a coiled coil.

Belongs to the class-I aminoacyl-tRNA synthetase family. ValS type 1 subfamily. In terms of assembly, monomer.

The protein localises to the cytoplasm. It catalyses the reaction tRNA(Val) + L-valine + ATP = L-valyl-tRNA(Val) + AMP + diphosphate. Its function is as follows. Catalyzes the attachment of valine to tRNA(Val). As ValRS can inadvertently accommodate and process structurally similar amino acids such as threonine, to avoid such errors, it has a 'posttransfer' editing activity that hydrolyzes mischarged Thr-tRNA(Val) in a tRNA-dependent manner. The protein is Valine--tRNA ligase of Brucella melitensis biotype 1 (strain ATCC 23456 / CCUG 17765 / NCTC 10094 / 16M).